The chain runs to 354 residues: Period circadian protein (354 aa).

PAS domains follow at residues 1–55 (GIVM…VNGQ) and 133–235 (FVMR…HIIE). Residues 318-354 (IQDPDHSYYQRDSVMLGGISPHHDYNDSKSSTGTPLS) are disordered. The span at 345–354 (SKSSTGTPLS) shows a compositional bias: polar residues.

Forms a heterodimer with timeless (TIM); the complex then translocates into the nucleus. Phosphorylated with a circadian rhythmicity.

It is found in the nucleus. In terms of biological role, involved in the generation of biological rhythms. The biological cycle depends on the rhythmic formation and nuclear localization of the tim-per complex. Light induces the degradation of tim, which promotes elimination of per. Nuclear activity of the heterodimer coordinatively regulates per and tim transcription negative feedback loop. Behaves as a negative element in circadian transcriptional loop. Does not appear to bind DNA, suggesting indirect transcriptional inhibition. The sequence is that of Period circadian protein (per) from Manduca sexta (Tobacco hawkmoth).